Consider the following 248-residue polypeptide: Ras-like protein family member 11B (248 aa).

The interval 29 to 246 (AGRRLVKIAV…ALSAKVRTVT (218 aa)) is small GTPase-like. Residues 40-47 (GASGVGKT), 87-91 (DTPGI), and 152-155 (NKAD) each bind GTP. The disordered stretch occupies residues 205-229 (QQPSGTPEKRRTSLIPRPKSPNMQD).

It belongs to the small GTPase superfamily. Ras family.

The catalysed reaction is GTP + H2O = GDP + phosphate + H(+). This Bos taurus (Bovine) protein is Ras-like protein family member 11B.